The following is a 506-amino-acid chain: Maturase K (506 aa).

This sequence belongs to the intron maturase 2 family. MatK subfamily.

The protein resides in the plastid. It localises to the chloroplast. Functionally, usually encoded in the trnK tRNA gene intron. Probably assists in splicing its own and other chloroplast group II introns. The chain is Maturase K from Melilotus indicus (Sourclover).